Here is a 612-residue protein sequence, read N- to C-terminus: UvrABC system protein C (612 aa).

The region spanning 21 to 99 (HQPGVYRMYD…IKKYRPRYNV (79 aa)) is the GIY-YIG domain. The UVR domain maps to 208 to 243 (QQVIDELMNKMEQASTDLDFERAARFRDQIAALRKT).

It belongs to the UvrC family. Interacts with UvrB in an incision complex.

Its subcellular location is the cytoplasm. In terms of biological role, the UvrABC repair system catalyzes the recognition and processing of DNA lesions. UvrC both incises the 5' and 3' sides of the lesion. The N-terminal half is responsible for the 3' incision and the C-terminal half is responsible for the 5' incision. The protein is UvrABC system protein C of Idiomarina loihiensis (strain ATCC BAA-735 / DSM 15497 / L2-TR).